The chain runs to 279 residues: Bifunctional protein FolD (279 aa).

NADP(+)-binding positions include 158-160 (GRS), serine 183, and isoleucine 224.

This sequence belongs to the tetrahydrofolate dehydrogenase/cyclohydrolase family. In terms of assembly, homodimer.

It carries out the reaction (6R)-5,10-methylene-5,6,7,8-tetrahydrofolate + NADP(+) = (6R)-5,10-methenyltetrahydrofolate + NADPH. The catalysed reaction is (6R)-5,10-methenyltetrahydrofolate + H2O = (6R)-10-formyltetrahydrofolate + H(+). Its pathway is one-carbon metabolism; tetrahydrofolate interconversion. Functionally, catalyzes the oxidation of 5,10-methylenetetrahydrofolate to 5,10-methenyltetrahydrofolate and then the hydrolysis of 5,10-methenyltetrahydrofolate to 10-formyltetrahydrofolate. The sequence is that of Bifunctional protein FolD from Caldicellulosiruptor saccharolyticus (strain ATCC 43494 / DSM 8903 / Tp8T 6331).